The sequence spans 419 residues: Acetyl transferase GW6a (419 aa).

The N-acetyltransferase domain occupies 12 to 210 (VRVREFDVEK…GHPVHAHRLP (199 aa)). A disordered region spans residues 44–68 (VHDHADDGDGAAAKEKKKTKTKTKK). The segment covering 58 to 68 (EKKKTKTKTKK) has biased composition (basic residues).

The protein belongs to the acetyltransferase family. In terms of assembly, interacts (via C-terminus) with HDR3 (via N-terminus). In terms of processing, ubiquitinated at Lys-63 by HDR3. Polyubiquitination of GW6A delays its degradation by the 26S proteasome and enhances GW6A histone acetyltransferase activity. As to expression, expressed in roots, leaf blades, leaf sheaths, shoot apical meristem and young panicles.

Its subcellular location is the nucleus. Functionally, possesses intrinsic histone acetyltransferase activity and acts as a positive regulator of grain weight, hull size, yield, and plant biomass. Regulates postitively grain weight and yield by enlarging spikelet hulls via increasing cell number and accelerating grain filling. In vitro, catalyzes the acetylation of histone H4 at Lys-6 (H4K5ac), Lys-13 (H4K12ac) and Lys-17 (H4K16ac). Involved in the regulation of plastochron (the time interval between leaf initiation event). This chain is Acetyl transferase GW6a, found in Oryza sativa subsp. japonica (Rice).